The primary structure comprises 93 residues: Pyrimidine/purine nucleoside phosphorylase (93 aa).

This sequence belongs to the nucleoside phosphorylase PpnP family.

It carries out the reaction a purine D-ribonucleoside + phosphate = a purine nucleobase + alpha-D-ribose 1-phosphate. The catalysed reaction is adenosine + phosphate = alpha-D-ribose 1-phosphate + adenine. It catalyses the reaction cytidine + phosphate = cytosine + alpha-D-ribose 1-phosphate. The enzyme catalyses guanosine + phosphate = alpha-D-ribose 1-phosphate + guanine. It carries out the reaction inosine + phosphate = alpha-D-ribose 1-phosphate + hypoxanthine. The catalysed reaction is thymidine + phosphate = 2-deoxy-alpha-D-ribose 1-phosphate + thymine. It catalyses the reaction uridine + phosphate = alpha-D-ribose 1-phosphate + uracil. The enzyme catalyses xanthosine + phosphate = alpha-D-ribose 1-phosphate + xanthine. In terms of biological role, catalyzes the phosphorolysis of diverse nucleosides, yielding D-ribose 1-phosphate and the respective free bases. Can use uridine, adenosine, guanosine, cytidine, thymidine, inosine and xanthosine as substrates. Also catalyzes the reverse reactions. In Magnetococcus marinus (strain ATCC BAA-1437 / JCM 17883 / MC-1), this protein is Pyrimidine/purine nucleoside phosphorylase.